The chain runs to 627 residues: tRNA uridine 5-carboxymethylaminomethyl modification enzyme MnmG (627 aa).

FAD-binding positions include 13–18 (GGGHAG), V125, and S180. Residue 274–288 (GPRYCPSIEDKVVRF) participates in NAD(+) binding. Q371 serves as a coordination point for FAD.

This sequence belongs to the MnmG family. Homodimer. Heterotetramer of two MnmE and two MnmG subunits. It depends on FAD as a cofactor.

The protein localises to the cytoplasm. Its function is as follows. NAD-binding protein involved in the addition of a carboxymethylaminomethyl (cmnm) group at the wobble position (U34) of certain tRNAs, forming tRNA-cmnm(5)s(2)U34. This Francisella tularensis subsp. tularensis (strain FSC 198) protein is tRNA uridine 5-carboxymethylaminomethyl modification enzyme MnmG.